A 472-amino-acid polypeptide reads, in one-letter code: Ribulose bisphosphate carboxylase large chain 1 (472 aa).

Substrate-binding residues include asparagine 115 and threonine 165. Lysine 167 (proton acceptor) is an active-site residue. Position 169 (lysine 169) interacts with substrate. The Mg(2+) site is built by lysine 193, aspartate 195, and glutamate 196. At lysine 193 the chain carries N6-carboxylysine. The active-site Proton acceptor is the histidine 286. Substrate is bound by residues arginine 287, histidine 319, and serine 371.

This sequence belongs to the RuBisCO large chain family. Type I subfamily. In terms of assembly, heterohexadecamer of 8 large chains and 8 small chains. Mg(2+) serves as cofactor.

It catalyses the reaction 2 (2R)-3-phosphoglycerate + 2 H(+) = D-ribulose 1,5-bisphosphate + CO2 + H2O. The catalysed reaction is D-ribulose 1,5-bisphosphate + O2 = 2-phosphoglycolate + (2R)-3-phosphoglycerate + 2 H(+). Its function is as follows. RuBisCO catalyzes two reactions: the carboxylation of D-ribulose 1,5-bisphosphate, the primary event in carbon dioxide fixation, as well as the oxidative fragmentation of the pentose substrate. Both reactions occur simultaneously and in competition at the same active site. The protein is Ribulose bisphosphate carboxylase large chain 1 of Rhodopseudomonas palustris (strain BisB5).